A 352-amino-acid polypeptide reads, in one-letter code: Uroporphyrinogen decarboxylase (352 aa).

Residues 26 to 30 (RQAGR), Phe45, Asp76, Tyr153, Ser208, and His323 contribute to the substrate site.

The protein belongs to the uroporphyrinogen decarboxylase family. In terms of assembly, homodimer.

Its subcellular location is the cytoplasm. It catalyses the reaction uroporphyrinogen III + 4 H(+) = coproporphyrinogen III + 4 CO2. It functions in the pathway porphyrin-containing compound metabolism; protoporphyrin-IX biosynthesis; coproporphyrinogen-III from 5-aminolevulinate: step 4/4. Its function is as follows. Catalyzes the decarboxylation of four acetate groups of uroporphyrinogen-III to yield coproporphyrinogen-III. This is Uroporphyrinogen decarboxylase from Prochlorococcus marinus (strain MIT 9313).